A 97-amino-acid polypeptide reads, in one-letter code: M-zodatoxin-Lt7a (97 aa).

An N-terminal signal peptide occupies residues 1-22 (MKFYVVALALLVAFVCIAESRS). A propeptide spanning residues 23–63 (VETERAVDADLEDDLDDLEEYLEGIAEALELEDFPDTEEAR) is cleaved from the precursor. Residues 60 to 63 (EEAR) carry the Processing quadruplet motif motif.

Post-translationally, cleavage of the propeptide depends on the processing quadruplet motif (XXXR, with at least one of X being E). In terms of tissue distribution, expressed by the venom gland.

The protein resides in the secreted. Does not have antimicrobial or antifungal activity. Does not have hemolytic activity against rabbit erythrocytes. However, it causes some conductance changes in planar bilayer membranes, without membrane rupture, suggesting a cytolytic function on other biological targets. It causes paralysis, but is not lethal when injected into insect (M.domestica) larvae. The protein is M-zodatoxin-Lt7a of Lachesana tarabaevi (Spider).